Here is a 245-residue protein sequence, read N- to C-terminus: Probable octanoyltransferase 2 (245 aa).

Residues 38–227 (MEYKPVLYFQ…SIEKEFDIKE (190 aa)) form the BPL/LPL catalytic domain. Substrate is bound by residues 89 to 96 (RGGYETYH), 157 to 159 (SIG), and 170 to 172 (GMA). The active-site Acyl-thioester intermediate is cysteine 188.

The protein belongs to the LipB family.

It localises to the cytoplasm. The enzyme catalyses octanoyl-[ACP] + L-lysyl-[protein] = N(6)-octanoyl-L-lysyl-[protein] + holo-[ACP] + H(+). It functions in the pathway protein modification; protein lipoylation via endogenous pathway; protein N(6)-(lipoyl)lysine from octanoyl-[acyl-carrier-protein]: step 1/2. Its function is as follows. Catalyzes the transfer of endogenously produced octanoic acid from octanoyl-acyl-carrier-protein onto the lipoyl domains of lipoate-dependent enzymes. Lipoyl-ACP can also act as a substrate although octanoyl-ACP is likely to be the physiological substrate. This chain is Probable octanoyltransferase 2, found in Picrophilus torridus (strain ATCC 700027 / DSM 9790 / JCM 10055 / NBRC 100828 / KAW 2/3).